A 380-amino-acid chain; its full sequence is Cytochrome b (380 aa).

Transmembrane regions (helical) follow at residues F33–M53, W77–I98, W113–L133, and F178–L198. Residues H83 and H97 each contribute to the heme b site. Heme b contacts are provided by H182 and H196. H201 contacts a ubiquinone. Helical transmembrane passes span Y226 to S246, L288 to H308, I320 to G340, and F347 to P367.

It belongs to the cytochrome b family. In terms of assembly, the cytochrome bc1 complex contains 3 respiratory subunits (MT-CYB, CYC1 and UQCRFS1), 2 core proteins (UQCRC1 and UQCRC2) and probably 6 low-molecular weight proteins. It depends on heme b as a cofactor.

Its subcellular location is the mitochondrion inner membrane. Its function is as follows. Component of the ubiquinol-cytochrome c reductase complex (complex III or cytochrome b-c1 complex) that is part of the mitochondrial respiratory chain. The b-c1 complex mediates electron transfer from ubiquinol to cytochrome c. Contributes to the generation of a proton gradient across the mitochondrial membrane that is then used for ATP synthesis. The protein is Cytochrome b (mt-cyb) of Percopsis transmontana (Sand roller).